Here is a 445-residue protein sequence, read N- to C-terminus: 6-phosphogluconate dehydrogenase, decarboxylating (445 aa).

Residues 1-4 (AVMG), 22-24 (NRS), 63-65 (VKA), and asparagine 91 each bind NADP(+). Substrate contacts are provided by residues asparagine 91 and 117–119 (SGG). Catalysis depends on lysine 172, which acts as the Proton acceptor. 175–176 (HN) is a substrate binding site. Catalysis depends on glutamate 179, which acts as the Proton donor. Substrate-binding residues include tyrosine 180, lysine 249, arginine 276, arginine 434, and histidine 440.

Belongs to the 6-phosphogluconate dehydrogenase family. As to quaternary structure, homodimer.

It catalyses the reaction 6-phospho-D-gluconate + NADP(+) = D-ribulose 5-phosphate + CO2 + NADPH. Its pathway is carbohydrate degradation; pentose phosphate pathway; D-ribulose 5-phosphate from D-glucose 6-phosphate (oxidative stage): step 3/3. Catalyzes the oxidative decarboxylation of 6-phosphogluconate to ribulose 5-phosphate and CO(2), with concomitant reduction of NADP to NADPH. The protein is 6-phosphogluconate dehydrogenase, decarboxylating (gnd) of Citrobacter amalonaticus.